The sequence spans 686 residues: Band 4.1-like protein 4A (686 aa).

The 289-residue stretch at 11–299 (FYCEVLLLDE…EHHTFFRMPE (289 aa)) folds into the FERM domain. At Ser-304 the chain carries Phosphoserine. The interval 331-686 (RDLSIQLPRP…IQASRLKTET (356 aa)) is disordered. Over residues 357–376 (AQTQPAESNSISRITANMEN) the composition is skewed to polar residues. A phosphoserine mark is found at Ser-389, Ser-393, and Ser-402. Polar residues predominate over residues 418–428 (GPQSGLYNSPS). Low complexity predominate over residues 479-489 (RCNTSSGSESE). Basic and acidic residues-rich tracts occupy residues 518-527 (VLRRQKEKNQ) and 547-561 (QAKE…KELV). Over residues 588-601 (IRHSHSPRSYRQYR) the composition is skewed to basic residues. Positions 648–658 (GSKDSLMEEKP) are enriched in basic and acidic residues. Over residues 673–686 (TIKTIQASRLKTET) the composition is skewed to polar residues.

In terms of tissue distribution, expressed in many tissues. High levels of expression in brain, liver, thymus and peripheral blood leukocytes and low levels of expression in heart, kidney, testis and colon.

It is found in the cytoplasm. It localises to the cytoskeleton. The chain is Band 4.1-like protein 4A from Homo sapiens (Human).